The following is a 458-amino-acid chain: V-type sodium ATPase subunit B (458 aa).

It belongs to the ATPase alpha/beta chains family.

Functionally, involved in ATP-driven sodium extrusion. In Enterococcus hirae (strain ATCC 9790 / DSM 20160 / JCM 8729 / LMG 6399 / NBRC 3181 / NCIMB 6459 / NCDO 1258 / NCTC 12367 / WDCM 00089 / R), this protein is V-type sodium ATPase subunit B (ntpB).